Consider the following 398-residue polypeptide: Candidapepsin-2 (398 aa).

An N-terminal signal peptide occupies residues 1 to 18; sequence MFLKNIFIGLAIALLVDA. A propeptide spans 19 to 56 (activation peptide); the sequence is TPTTTKRSAGFVALDFSVVKTPKAFPVTNGQEGKTSKR. The 315-residue stretch at 70–384 folds into the Peptidase A1 domain; sequence YAADITVGSN…DLDNNEISLA (315 aa). The active site involves aspartate 88. Residue 88–90 participates in pepstatin A binding; the sequence is DTG. Cysteine 103 and cysteine 115 are oxidised to a cystine. Pepstatin A is bound by residues 141–142 and 274–278; these read GD and DSGTT. The active site involves aspartate 274. A disulfide bridge links cysteine 312 with cysteine 350. 2 N-linked (GlcNAc...) asparagine glycosylation sites follow: asparagine 313 and asparagine 321.

It belongs to the peptidase A1 family. In terms of assembly, monomer. Post-translationally, O-glycosylated.

The protein resides in the secreted. It carries out the reaction Preferential cleavage at the carboxyl of hydrophobic amino acids, but fails to cleave 15-Leu-|-Tyr-16, 16-Tyr-|-Leu-17 and 24-Phe-|-Phe-25 of insulin B chain. Activates trypsinogen, and degrades keratin.. The sequence is that of Candidapepsin-2 (SAP2) from Candida albicans (strain WO-1) (Yeast).